Reading from the N-terminus, the 369-residue chain is MLKLLLSPRSFLVLQLLLLRAGWSSKVLMSSANEDIKADLILTSTAPEHLSAPTLPLPEVQCFVFNIEYMNCTWNSSSEPQATNLTLHYRYKVSDNNTFQECSHYLFSKEITSGCQIQKEDIQLYQTFVVQLQDPQKPQRRAVQKLNLQNLVIPRAPENLTLSNLSESQLELRWKSRHIKERCLQYLVQYRSNRDRSWTELIVNHEPRFSLPSVDELKRYTFRVRSRYNPICGSSQQWSKWSQPVHWGSHTVEENPSLFALEAVLIPVGTMGLIITLIFVYCWLERMPPIPPIKNLEDLVTEYQGNFSAWSGVSKGLTESLQPDYSERFCHVSEIPPKGGALGEGPGGSPCSLHSPYWPPPCYSLKPEA.

The N-terminal stretch at 1-22 (MLKLLLSPRSFLVLQLLLLRAG) is a signal peptide. Over 23–263 (WSSKVLMSSA…ENPSLFALEA (241 aa)) the chain is Extracellular. Cys62 and Cys72 form a disulfide bridge. N-linked (GlcNAc...) asparagine glycans are attached at residues Asn71, Asn75, Asn84, and Asn96. The cysteines at positions 102 and 115 are disulfide-linked. The region spanning 156–254 (APENLTLSNL…VHWGSHTVEE (99 aa)) is the Fibronectin type-III domain. Residues Asn159 and Asn164 are each glycosylated (N-linked (GlcNAc...) asparagine). The WSXWS motif signature appears at 238–242 (WSKWS). Residues 264–284 (VLIPVGTMGLIITLIFVYCWL) form a helical membrane-spanning segment. At 285 to 369 (ERMPPIPPIK…PPCYSLKPEA (85 aa)) the chain is on the cytoplasmic side. The short motif at 286–294 (RMPPIPPIK) is the Box 1 motif element.

This sequence belongs to the type I cytokine receptor family. Type 5 subfamily. As to quaternary structure, the gamma subunit is common to the IL2, IL4, IL7, IL15, IL21 and probably also the IL13 receptors. Interacts with SHB upon interleukin stimulation. Interacts with IL9.

It localises to the cell membrane. The protein localises to the cell surface. In terms of biological role, common subunit for the receptors for a variety of interleukins. Probably in association with IL15RA, involved in the stimulation of neutrophil phagocytosis by IL15. In Mus musculus (Mouse), this protein is Cytokine receptor common subunit gamma (Il2rg).